We begin with the raw amino-acid sequence, 958 residues long: Voltage-gated inwardly rectifying potassium channel KCNH6 (958 aa).

Residues Met1 to Trp261 lie on the Cytoplasmic side of the membrane. Residues Ile41 to Thr70 enclose the PAS domain. One can recognise a PAC domain in the interval Cys92 to Leu144. The helical transmembrane segment at Leu262 to Leu282 threads the bilayer. Topologically, residues Ser283 to Ser298 are extracellular. A helical transmembrane segment spans residues Pro299–Phe319. The Cytoplasmic portion of the chain corresponds to Arg320 to His340. Residues Tyr341–Phe361 traverse the membrane as a helical segment. Over Arg362 to Thr370 the chain is Extracellular. The chain crosses the membrane as a helical; Voltage-sensor span at residues Leu371 to Asp391. Over Arg392 to Ala398 the chain is Cytoplasmic. Residues Ala399–Trp419 traverse the membrane as a helical segment. Topologically, residues Tyr420–Tyr463 are extracellular. The N-linked (GlcNAc...) (complex) asparagine glycan is linked to Asn449. The pore-forming intramembrane region spans Val464–Pro484. Residues Ser476–Asn481 carry the Selectivity filter motif. Topologically, residues Asn485–Lys490 are extracellular. A helical transmembrane segment spans residues Val491–Val511. Residues Ser512 to His958 lie on the Cytoplasmic side of the membrane. Residues Ala594 to Leu694 form a cNMP-binding domain region. Disordered stretches follow at residues Gly720–Ser751 and Thr845–Ala910. The segment covering Ser724 to Asp745 has biased composition (polar residues).

Belongs to the potassium channel family. H (Eag) (TC 1.A.1.20) subfamily. Kv11.2/KCNH6 sub-subfamily. The potassium channel is probably composed of a homo- or heterotetrameric complex of pore-forming alpha subunits that can associate only within their subfamily. Expressed in prolactin-secreting adenomas.

It localises to the cell membrane. The enzyme catalyses K(+)(in) = K(+)(out). In terms of biological role, pore-forming (alpha) subunit of voltage-gated inwardly rectifying potassium channel. Characterized by unusual gating kinetics by producing relatively small outward currents during membrane depolarization and large inward currents during subsequent repolarization which reflect a rapid inactivation during depolarization and quick recovery from inactivation but slow deactivation (closing) during repolarization. Activates even more slowly than KCNH2. The sequence is that of Voltage-gated inwardly rectifying potassium channel KCNH6 from Homo sapiens (Human).